A 366-amino-acid polypeptide reads, in one-letter code: tRNA/tmRNA (uracil-C(5))-methyltransferase (366 aa).

S-adenosyl-L-methionine contacts are provided by Q189, Y217, N222, E238, and D298. C323 (nucleophile) is an active-site residue. The Proton acceptor role is filled by E357.

Belongs to the class I-like SAM-binding methyltransferase superfamily. RNA M5U methyltransferase family. TrmA subfamily.

It carries out the reaction uridine(54) in tRNA + S-adenosyl-L-methionine = 5-methyluridine(54) in tRNA + S-adenosyl-L-homocysteine + H(+). The catalysed reaction is uridine(341) in tmRNA + S-adenosyl-L-methionine = 5-methyluridine(341) in tmRNA + S-adenosyl-L-homocysteine + H(+). Its function is as follows. Dual-specificity methyltransferase that catalyzes the formation of 5-methyluridine at position 54 (m5U54) in all tRNAs, and that of position 341 (m5U341) in tmRNA (transfer-mRNA). The polypeptide is tRNA/tmRNA (uracil-C(5))-methyltransferase (Photorhabdus laumondii subsp. laumondii (strain DSM 15139 / CIP 105565 / TT01) (Photorhabdus luminescens subsp. laumondii)).